The primary structure comprises 744 residues: Scytalone dehydratase-like protein Arp1 (744 aa).

Position 621 (Tyr-621) interacts with substrate. Residues His-656 and His-681 contribute to the active site. Substrate is bound at residue Asn-702.

It belongs to the scytalone dehydratase family. Homotrimer. Each subunit contains an active site, located in the central part of the hydrophobic core of the monomer, which functions independently.

Scytalone dehydratase-like protein; part of the Pks2 gene cluster that mediates the formation of infectious structures (appressoria), enabling these fungi to kill insects faster. The product of the Pks2 gene cluster is different from the one of Pks1 and has still not been identified. The sequence is that of Scytalone dehydratase-like protein Arp1 from Metarhizium brunneum (strain ARSEF 3297).